The primary structure comprises 431 residues: Signal recognition particle 54 kDa protein (431 aa).

Residues 105 to 112 (GVEGSGKT), 185 to 189 (DTAGR), and 243 to 246 (TKMD) each bind GTP.

This sequence belongs to the GTP-binding SRP family. SRP54 subfamily. Part of the signal recognition particle protein translocation system, which is composed of SRP and FtsY. Archaeal SRP consists of a 7S RNA molecule of 300 nucleotides and two protein subunits: SRP54 and SRP19.

It localises to the cytoplasm. The catalysed reaction is GTP + H2O = GDP + phosphate + H(+). In terms of biological role, involved in targeting and insertion of nascent membrane proteins into the cytoplasmic membrane. Binds to the hydrophobic signal sequence of the ribosome-nascent chain (RNC) as it emerges from the ribosomes. The SRP-RNC complex is then targeted to the cytoplasmic membrane where it interacts with the SRP receptor FtsY. The chain is Signal recognition particle 54 kDa protein from Pyrobaculum calidifontis (strain DSM 21063 / JCM 11548 / VA1).